We begin with the raw amino-acid sequence, 180 residues long: Bifunctional protein PyrR (180 aa).

A PRPP-binding motif is present at residues 99–111 (VILVDDVLYTCRT).

The protein belongs to the purine/pyrimidine phosphoribosyltransferase family. PyrR subfamily. Homodimer and homohexamer; in equilibrium.

The enzyme catalyses UMP + diphosphate = 5-phospho-alpha-D-ribose 1-diphosphate + uracil. Its function is as follows. Regulates transcriptional attenuation of the pyrimidine nucleotide (pyr) operon by binding in a uridine-dependent manner to specific sites on pyr mRNA. This disrupts an antiterminator hairpin in the RNA and favors formation of a downstream transcription terminator, leading to a reduced expression of downstream genes. In terms of biological role, also displays a weak uracil phosphoribosyltransferase activity which is not physiologically significant. The polypeptide is Bifunctional protein PyrR (Clostridium botulinum (strain Eklund 17B / Type B)).